The following is a 309-amino-acid chain: Homoserine kinase (309 aa).

Residue 91-101 participates in ATP binding; sequence PIGSGLGSSAC.

This sequence belongs to the GHMP kinase family. Homoserine kinase subfamily.

It localises to the cytoplasm. It catalyses the reaction L-homoserine + ATP = O-phospho-L-homoserine + ADP + H(+). The protein operates within amino-acid biosynthesis; L-threonine biosynthesis; L-threonine from L-aspartate: step 4/5. Catalyzes the ATP-dependent phosphorylation of L-homoserine to L-homoserine phosphate. The polypeptide is Homoserine kinase (Escherichia fergusonii (strain ATCC 35469 / DSM 13698 / CCUG 18766 / IAM 14443 / JCM 21226 / LMG 7866 / NBRC 102419 / NCTC 12128 / CDC 0568-73)).